The primary structure comprises 364 residues: Dihydroorotate dehydrogenase (quinone) (364 aa).

FMN is bound by residues 61 to 65 (AGFDK) and Thr-85. Lys-65 contacts substrate. Substrate is bound at residue 110 to 114 (NRMGF). FMN is bound by residues Asn-139 and Asn-170. Position 170 (Asn-170) interacts with substrate. Catalysis depends on Ser-173, which acts as the Nucleophile. Asn-175 serves as a coordination point for substrate. Lys-214 and Ala-242 together coordinate FMN. Residue 243–244 (NT) coordinates substrate. FMN is bound by residues Gly-266, Gly-295, and 316 to 317 (YS).

The protein belongs to the dihydroorotate dehydrogenase family. Type 2 subfamily. As to quaternary structure, monomer. FMN serves as cofactor.

The protein resides in the cell membrane. It catalyses the reaction (S)-dihydroorotate + a quinone = orotate + a quinol. It functions in the pathway pyrimidine metabolism; UMP biosynthesis via de novo pathway; orotate from (S)-dihydroorotate (quinone route): step 1/1. Its function is as follows. Catalyzes the conversion of dihydroorotate to orotate with quinone as electron acceptor. The sequence is that of Dihydroorotate dehydrogenase (quinone) from Rhodopseudomonas palustris (strain HaA2).